The chain runs to 392 residues: Integrin-linked kinase-associated serine/threonine phosphatase 2C (392 aa).

Met1 is modified (N-acetylmethionine). The disordered stretch occupies residues 1–91 (MDLFGDLPEP…PEEEKNGGEE (91 aa)). Residues 31–40 (DLPPTSSTDS) are compositionally biased toward low complexity. The segment covering 59–70 (SGSLATSGSQVV) has biased composition (polar residues). The segment covering 72–91 (NEGKGAKRKAPEEEKNGGEE) has biased composition (basic and acidic residues). The PPM-type phosphatase domain maps to 108-390 (KGYVAERKGE…DNVTVMVVRI (283 aa)). 2 residues coordinate Mn(2+): Asp152 and Gly153. N6-acetyllysine is present on Lys210. Asp326 and Asp381 together coordinate Mn(2+).

This sequence belongs to the PP2C family. As to quaternary structure, interacts with ILK. Mg(2+) is required as a cofactor. Requires Mn(2+) as cofactor. In terms of tissue distribution, widely expressed. Highest expression observed in kidney, liver and muscle.

It is found in the cytoplasm. It carries out the reaction O-phospho-L-seryl-[protein] + H2O = L-seryl-[protein] + phosphate. It catalyses the reaction O-phospho-L-threonyl-[protein] + H2O = L-threonyl-[protein] + phosphate. In terms of biological role, protein phosphatase that may play a role in regulation of cell cycle progression via dephosphorylation of its substrates whose appropriate phosphorylation states might be crucial for cell proliferation. Selectively associates with integrin linked kinase (ILK), to modulate cell adhesion and growth factor signaling. Inhibits the ILK-GSK3B signaling axis and may play an important role in inhibiting oncogenic transformation. This chain is Integrin-linked kinase-associated serine/threonine phosphatase 2C (Ilkap), found in Rattus norvegicus (Rat).